A 347-amino-acid polypeptide reads, in one-letter code: Quinolinate synthase (347 aa).

Histidine 47 and serine 68 together coordinate iminosuccinate. Residue cysteine 113 participates in [4Fe-4S] cluster binding. Iminosuccinate contacts are provided by residues 139–141 (YAN) and serine 156. Cysteine 200 contributes to the [4Fe-4S] cluster binding site. Iminosuccinate contacts are provided by residues 226–228 (HPE) and threonine 243. Cysteine 297 contributes to the [4Fe-4S] cluster binding site.

Belongs to the quinolinate synthase family. Type 1 subfamily. It depends on [4Fe-4S] cluster as a cofactor.

Its subcellular location is the cytoplasm. It carries out the reaction iminosuccinate + dihydroxyacetone phosphate = quinolinate + phosphate + 2 H2O + H(+). It participates in cofactor biosynthesis; NAD(+) biosynthesis; quinolinate from iminoaspartate: step 1/1. In terms of biological role, catalyzes the condensation of iminoaspartate with dihydroxyacetone phosphate to form quinolinate. This chain is Quinolinate synthase, found in Enterobacter sp. (strain 638).